The primary structure comprises 249 residues: DnaJ homolog subfamily C member 5 homolog (249 aa).

S12 is subject to Phosphoserine. T13 is subject to Phosphothreonine. Residues S14 and S17 each carry the phosphoserine modification. The 70-residue stretch at 15-84 folds into the J domain; the sequence is GDSLYEILGL…RNIYDNYGSL (70 aa). Y19 carries the phosphotyrosine modification. Positions 146 to 162 are enriched in basic and acidic residues; it reads HDQYSHLNRPDGNREGN. Disordered stretches follow at residues 146-177 and 218-249; these read HDQYSHLNRPDGNREGNDMPTHLGQPPRLEDV and PFTGAPVAANENTSLNTTEQTTYTPDMVNQKY. A compositionally biased stretch (polar residues) spans 227–241; sequence NENTSLNTTEQTTYT.

Fatty acylated. Heavily palmitoylated in the cysteine string motif. Expressed in wide range of synaptic terminals: embryonic nervous system, larval neuromuscular junctions, adult visual system (neuropil of optic ganglia and terminal of R1-8 photoreceptors) and thoracic neuromuscular junctions. Also expressed in non-neuronal cells: follicle cells, spermatheca, testis and ejaculatory bulb. Low level of expression is found in many neuronal and non-neuronal tissues.

It localises to the membrane. Functionally, may have an important role in presynaptic function. The sequence is that of DnaJ homolog subfamily C member 5 homolog from Drosophila melanogaster (Fruit fly).